We begin with the raw amino-acid sequence, 284 residues long: Avenin-like b6 (284 aa).

The signal sequence occupies residues 1-18; that stretch reads MKVFILALLALAATTAIA.

It belongs to the prolamin family. Post-translationally, contains disulfide bonds.

Functionally, seed storage protein. Might be integrated via inter-chain disulfide bonds within the glutenin polymer. The protein is Avenin-like b6 of Triticum aestivum (Wheat).